Consider the following 238-residue polypeptide: Pyridoxine 5'-phosphate synthase (238 aa).

Asparagine 9 is a binding site for 3-amino-2-oxopropyl phosphate. Aspartate 11–histidine 12 is a 1-deoxy-D-xylulose 5-phosphate binding site. Arginine 20 is a 3-amino-2-oxopropyl phosphate binding site. Catalysis depends on histidine 45, which acts as the Proton acceptor. 1-deoxy-D-xylulose 5-phosphate is bound by residues arginine 47 and histidine 52. The active-site Proton acceptor is glutamate 72. Threonine 102 is a 1-deoxy-D-xylulose 5-phosphate binding site. Histidine 189 serves as the catalytic Proton donor. 3-amino-2-oxopropyl phosphate contacts are provided by residues glycine 190 and glycine 211 to histidine 212.

Belongs to the PNP synthase family. Homooctamer; tetramer of dimers.

It is found in the cytoplasm. The enzyme catalyses 3-amino-2-oxopropyl phosphate + 1-deoxy-D-xylulose 5-phosphate = pyridoxine 5'-phosphate + phosphate + 2 H2O + H(+). It participates in cofactor biosynthesis; pyridoxine 5'-phosphate biosynthesis; pyridoxine 5'-phosphate from D-erythrose 4-phosphate: step 5/5. Functionally, catalyzes the complicated ring closure reaction between the two acyclic compounds 1-deoxy-D-xylulose-5-phosphate (DXP) and 3-amino-2-oxopropyl phosphate (1-amino-acetone-3-phosphate or AAP) to form pyridoxine 5'-phosphate (PNP) and inorganic phosphate. The polypeptide is Pyridoxine 5'-phosphate synthase (Ehrlichia ruminantium (strain Welgevonden)).